We begin with the raw amino-acid sequence, 202 residues long: Protease (202 aa).

Catalysis depends on residues His-55, Asp-72, and Cys-122.

The protein belongs to the peptidase C5 family. Interacts with protease cofactor pVI-C; this interaction is necessary for protease activation.

The protein resides in the virion. The protein localises to the host nucleus. The enzyme catalyses Cleaves proteins of the adenovirus and its host cell at two consensus sites: -Yaa-Xaa-Gly-Gly-|-Xaa- and -Yaa-Xaa-Gly-Xaa-|-Gly- (in which Yaa is Met, Ile or Leu, and Xaa is any amino acid).. Requires DNA and protease cofactor for maximal activation. Inside nascent virions, becomes partially activated by binding to the viral DNA, allowing it to cleave the cofactor that binds to the protease and fully activates it. Actin, like the viral protease cofactor, seems to act as a cofactor in the cleavage of cytokeratin 18 and of actin itself. Cleaves viral precursor proteins (pTP, pIIIa, pVI, pVII, pVIII, and pX) inside newly assembled particles giving rise to mature virions. Protease complexed to its cofactor slides along the viral DNA to specifically locate and cleave the viral precursors. Mature virions have a weakened organization compared to the unmature virions, thereby facilitating subsequent uncoating. Without maturation, the particle lacks infectivity and is unable to uncoat. Late in adenovirus infection, in the cytoplasm, may participate in the cytoskeleton destruction. Cleaves host cell cytoskeletal keratins K7 and K18. This chain is Protease, found in Bovine adenovirus 7 (BAdV-7).